A 363-amino-acid polypeptide reads, in one-letter code: 3-isopropylmalate dehydrogenase (363 aa).

77-90 (GPKWQHLPPDQQPE) provides a ligand contact to NAD(+). Substrate contacts are provided by arginine 98, arginine 108, arginine 137, and aspartate 226. Residues aspartate 226, aspartate 250, and aspartate 254 each coordinate Mg(2+). Residue 284–296 (GSAPDIAGKNIAN) coordinates NAD(+).

It belongs to the isocitrate and isopropylmalate dehydrogenases family. LeuB type 1 subfamily. In terms of assembly, homodimer. It depends on Mg(2+) as a cofactor. Mn(2+) is required as a cofactor.

The protein resides in the cytoplasm. The catalysed reaction is (2R,3S)-3-isopropylmalate + NAD(+) = 4-methyl-2-oxopentanoate + CO2 + NADH. The protein operates within amino-acid biosynthesis; L-leucine biosynthesis; L-leucine from 3-methyl-2-oxobutanoate: step 3/4. Catalyzes the oxidation of 3-carboxy-2-hydroxy-4-methylpentanoate (3-isopropylmalate) to 3-carboxy-4-methyl-2-oxopentanoate. The product decarboxylates to 4-methyl-2 oxopentanoate. The sequence is that of 3-isopropylmalate dehydrogenase from Buchnera aphidicola subsp. Pemphigus spyrothecae.